A 610-amino-acid polypeptide reads, in one-letter code: Modifier of mdg4 (610 aa).

Residues 1-160 (MADDEQFSLC…QQPRASARYK (160 aa)) are self-association. An interaction with Chi region spans residues 1–308 (MADDEQFSLC…EEAEYIDLPM (308 aa)). The 67-residue stretch at 32–98 (VDVSLAAEGQ…MYCGEVNVKQ (67 aa)) folds into the BTB domain. Disordered stretches follow at residues 115–156 (GLTD…PRAS), 219–259 (VSTN…DSTT), 311–339 (PTKSEPDYSEDHGDAAGDAEGTYVEDDTY), and 386–432 (ESSF…PKPK). Residues 122–135 (APQPPQESSPPPAA) are compositionally biased toward pro residues. The span at 136–156 (PHVQQQQIPAQRVQRQQPRAS) shows a compositional bias: low complexity. Over residues 222 to 238 (NKRSAQRSSLTPASSSA) the composition is skewed to polar residues. The residue at position 230 (Ser-230) is a Phosphoserine. The span at 312-325 (TKSEPDYSEDHGDA) shows a compositional bias: basic and acidic residues. The segment covering 386–400 (ESSFVDTSGDQGNTE) has biased composition (polar residues). Residues 401–410 (AQAATSASAT) show a composition bias toward low complexity. Residues 422 to 432 (TKVEDQTPKPK) are compositionally biased toward basic and acidic residues. Residues 452-512 (YASTTKGGVK…VFPYEGEHVH (61 aa)) form an FLYWCH-type zinc finger. The tract at residues 551-610 (LEEADDKEDEDFEEFEIQEIDEIELDEPEKTPAKEEEVDPNDFREKIKRRLQKALQNKKK) is interaction with su(Hw). Residues 567–577 (IQEIDEIELDE) show a composition bias toward acidic residues. Residues 567 to 595 (IQEIDEIELDEPEKTPAKEEEVDPNDFRE) are disordered. Basic and acidic residues predominate over residues 578-595 (PEKTPAKEEEVDPNDFRE).

In terms of assembly, can self-associate. Interacts with Chi. Interacts with Top2. Isoform mod2.2: Component of the gypsy chromatin insulator complex, composed of Cp190, mod(mdg4) and su(Hw). The gypsy chromatin insulator complex interacts with Topors via mod(mdg4) and su(Hw). Isoform mod2.2 interacts with Trl/GAGA and interaction with this protein may bypass the repressive effects of the su(Hw) insulator.

The protein resides in the nucleus. It localises to the chromosome. Component of the gypsy chromatin insulator complex which is required for the function of the gypsy chromatin insulator and other endogenous chromatin insulators. Chromatin insulators are regulatory elements which establish independent domains of transcriptional activity within eukaryotic genomes. Insulators have two defining properties; they can block the communication between an enhancer and a promoter when placed between them and can also buffer transgenes from position effect variegation (PEV). Insulators are proposed to structure the chromatin fiber into independent domains of differing transcriptional potential by promoting the formation of distinct chromatin loops. This chromatin looping may involve the formation of insulator bodies, where homotypic interactions between individual subunits of the insulator complex could promote the clustering of widely spaced insulators at the nuclear periphery. Within the gypsy insulator complex, this protein may control the nature of the repressive effect of su(Hw): in the absence of mod(mdg4) protein, su(Hw) exerts a bidirectional silencing effect, whereas in the presence of mod(mdg4), the silencing effect is unidirectional. Isoform H is specifically required to maintain the pairing of achiasmate homologs in male meiosis I which is mediated by the rDNA repeats on the achiasmate X-Y bivalents. Isoform H also plays a role in apoptotic regulatory pathways. The polypeptide is Modifier of mdg4 (Drosophila melanogaster (Fruit fly)).